The following is a 332-amino-acid chain: Packaging enzyme P4 (332 aa).

The interval Arg-111–Glu-138 is involved in the regulation and mechanisms of transcription, replication and genome packaging. Gly-126 to Ser-133 lines the ATP pocket. The interval Leu-310–Leu-332 is disordered. Basic and acidic residues predominate over residues Gly-313–Ser-322.

Homohexamer. Part of the packaging complex composed of RDRP, P4 and P7.

The protein resides in the virion. The enzyme catalyses a ribonucleoside 5'-triphosphate + H2O = a ribonucleoside 5'-diphosphate + phosphate + H(+). In terms of biological role, packaging motor with helicase and translocase activities. Part of the packaging complex that packages the viral RNA segments, replicate them into a double-stranded form and transcribe them. is one of the structural proteins of the polyhedral procapsid, which is responsible for genomic replication and transcription. Displays single-stranded RNA-stimulated NTPase activity. The protein is Packaging enzyme P4 (P4) of Pseudomonas savastanoi pv. phaseolicola (Pseudomonas syringae pv. phaseolicola).